We begin with the raw amino-acid sequence, 144 residues long: TSC22 domain family protein 1 (144 aa).

The segment at Leu-77–Leu-98 is leucine-zipper. The interval Gln-109–Ala-144 is disordered.

It belongs to the TSC-22/Dip/Bun family. In terms of assembly, forms homodimers. Forms a heterodimer with TSC22D4/THG1. Interacts with histone H1-2. Interacts with GNL3.

Its subcellular location is the cytoplasm. The protein resides in the nucleus. The protein localises to the mitochondrion. Transcriptional repressor. Plays a role in the repression of hematopoietic precursor cell growth. Promotes IL2 deprivation-induced apoptosis in T-lymphocytes, via repression of TSC22D3/GILZ transcription and activation of the caspase cascade. Positively regulates cell death in response to TGFB3 during mammary gland involution. In Bathyergus suillus (Cape dune mole rat), this protein is TSC22 domain family protein 1.